The following is a 311-amino-acid chain: MQAPPPEHCPGVESENAGKGSACSGCPNQGVCSDPNKKLEDPGKALVVESMKDVKHKLLILSGKGGVGKSTVTSLLTRYLARSNPDSNFGVLDIDICGPSQPRLMGALGESVHQSGYGWSPVGIEDNVCLMSIGFLLGSVDDAIIWRGPKKNGMIRQFLSEVDWGNLDLLLLDTPPGTSDEHLSVVSYLKDDTNPESLRAVMVTTPQEVSLLDVRKEINFCKKQNIPIVGVIENMSSFRCGHCGNTSEIFPAKTGGAVAMCAEMGIPLLGSLPLDQQISKACDSGEDLTTFKNVTSEALEGICSKIMASIS.

The tract at residues 1-20 (MQAPPPEHCPGVESENAGKG) is disordered. Residues C9, C23, C26, and C32 each coordinate [4Fe-4S] cluster. 63-70 (GKGGVGKS) provides a ligand contact to ATP. [4Fe-4S] cluster-binding residues include C240 and C243.

This sequence belongs to the Mrp/NBP35 ATP-binding proteins family. NUBP1/NBP35 subfamily. As to quaternary structure, heterotetramer of 2 Nubp1 and 2 Nubp2 chains. [4Fe-4S] cluster serves as cofactor.

The protein localises to the cytoplasm. Functionally, component of the cytosolic iron-sulfur (Fe/S) protein assembly (CIA) machinery. Required for maturation of extramitochondrial Fe-S proteins. The Nubp1-Nubp2 heterotetramer forms a Fe-S scaffold complex, mediating the de novo assembly of an Fe-S cluster and its transfer to target apoproteins. The chain is Cytosolic Fe-S cluster assembly factor Nubp1 homolog from Drosophila simulans (Fruit fly).